Reading from the N-terminus, the 285-residue chain is Glutamate racemase (285 aa).

Residues 28–29 (DS) and 60–61 (YG) each bind substrate. The active-site Proton donor/acceptor is Cys92. Residue 93-94 (NT) coordinates substrate. The Proton donor/acceptor role is filled by Cys204. 205 to 206 (TH) lines the substrate pocket.

It belongs to the aspartate/glutamate racemases family.

It carries out the reaction L-glutamate = D-glutamate. It functions in the pathway cell wall biogenesis; peptidoglycan biosynthesis. In terms of biological role, provides the (R)-glutamate required for cell wall biosynthesis. In Escherichia coli (strain UTI89 / UPEC), this protein is Glutamate racemase.